Here is a 46-residue protein sequence, read N- to C-terminus: Elongation factor Tu (46 aa).

Residues 1–10 are compositionally biased toward basic and acidic residues; sequence MAKGKFERSK. The disordered stretch occupies residues 1–20; the sequence is MAKGKFERSKPHVNVGTIGH. 19-26 lines the GTP pocket; that stretch reads GHVDHGKT.

This sequence belongs to the GTP-binding elongation factor family. EF-Tu/EF-1A subfamily. As to quaternary structure, monomer.

It is found in the cytoplasm. Functionally, this protein promotes the GTP-dependent binding of aminoacyl-tRNA to the A-site of ribosomes during protein biosynthesis. The polypeptide is Elongation factor Tu (tufA) (Eikenella corrodens).